The sequence spans 203 residues: ATP phosphoribosyltransferase (203 aa).

Belongs to the ATP phosphoribosyltransferase family. Short subfamily.

The protein localises to the cytoplasm. The enzyme catalyses 1-(5-phospho-beta-D-ribosyl)-ATP + diphosphate = 5-phospho-alpha-D-ribose 1-diphosphate + ATP. It functions in the pathway amino-acid biosynthesis; L-histidine biosynthesis; L-histidine from 5-phospho-alpha-D-ribose 1-diphosphate: step 1/9. Catalyzes the condensation of ATP and 5-phosphoribose 1-diphosphate to form N'-(5'-phosphoribosyl)-ATP (PR-ATP). Has a crucial role in the pathway because the rate of histidine biosynthesis seems to be controlled primarily by regulation of HisG enzymatic activity. The sequence is that of ATP phosphoribosyltransferase from Thermococcus kodakarensis (strain ATCC BAA-918 / JCM 12380 / KOD1) (Pyrococcus kodakaraensis (strain KOD1)).